The chain runs to 292 residues: NAD kinase (292 aa).

Residue D73 is the Proton acceptor of the active site. NAD(+) is bound by residues 73-74, 147-148, H158, R175, D177, 188-193, and Q247; these read DG, NE, and TGYSLS.

This sequence belongs to the NAD kinase family. It depends on a divalent metal cation as a cofactor.

It localises to the cytoplasm. It catalyses the reaction NAD(+) + ATP = ADP + NADP(+) + H(+). Its function is as follows. Involved in the regulation of the intracellular balance of NAD and NADP, and is a key enzyme in the biosynthesis of NADP. Catalyzes specifically the phosphorylation on 2'-hydroxyl of the adenosine moiety of NAD to yield NADP. In Buchnera aphidicola subsp. Schizaphis graminum (strain Sg), this protein is NAD kinase.